Here is a 97-residue protein sequence, read N- to C-terminus: UPF0235 protein DET1292 (97 aa).

It belongs to the UPF0235 family.

The chain is UPF0235 protein DET1292 from Dehalococcoides mccartyi (strain ATCC BAA-2266 / KCTC 15142 / 195) (Dehalococcoides ethenogenes (strain 195)).